A 183-amino-acid chain; its full sequence is Small ribosomal subunit protein uS5 (183 aa).

In terms of domain architecture, S5 DRBM spans 11–71 (FLERVVGINR…EEAKKSFFRV (61 aa)).

Belongs to the universal ribosomal protein uS5 family. In terms of assembly, part of the 30S ribosomal subunit. Contacts proteins S4 and S8.

Its function is as follows. With S4 and S12 plays an important role in translational accuracy. In terms of biological role, located at the back of the 30S subunit body where it stabilizes the conformation of the head with respect to the body. This is Small ribosomal subunit protein uS5 from Micrococcus luteus (Micrococcus lysodeikticus).